We begin with the raw amino-acid sequence, 355 residues long: MTRAERKKQHIEHALSTGQHAETGLKDVSFVHVGLPDLATSQIDTHTTIGGLTFGSPIFINAMTGGGGKSTYEINRSLSIAAKETNIPVAVGSQMAALKDKEERRTYEVVRKVNPNGIVFANLGSEATIKQAKEAVEMLEANMLQIHLNVIQEIVMPEGDRDFRGALERIAAIAESVGVPVVVKEVGFGMSKETAKKLFHAGVAAVDIGGFGGTNFSKIENLRRQKALHYFDQWGIPTAASLAEVHTSFPDQTVLASGGIQDALDVTKSIALGASAAGLAGFFLKSLTDGGEKGLIADMIDLQEDVKMMMTVLGAKTIEELRQTQVVISGDTSHWLKERGIDTTYYSVRTNKKKG.

6–7 contacts substrate; that stretch reads RK. FMN-binding positions include 62-64, Ser-93, and Asn-122; that span reads AMT. Gln-152 contributes to the substrate binding site. Glu-153 provides a ligand contact to Mg(2+). FMN contacts are provided by residues Lys-184, Thr-214, 258-259, and 280-281; these read GG and AG.

Belongs to the IPP isomerase type 2 family. In terms of assembly, homooctamer. Dimer of tetramers. FMN is required as a cofactor. The cofactor is NADPH. Requires Mg(2+) as cofactor.

It is found in the cytoplasm. The enzyme catalyses isopentenyl diphosphate = dimethylallyl diphosphate. Functionally, involved in the biosynthesis of isoprenoids. Catalyzes the 1,3-allylic rearrangement of the homoallylic substrate isopentenyl (IPP) to its allylic isomer, dimethylallyl diphosphate (DMAPP). This is Isopentenyl-diphosphate delta-isomerase from Bacillus pumilus (strain SAFR-032).